The chain runs to 201 residues: Thymidylate kinase (201 aa).

An ATP-binding site is contributed by 7–14; it reads GIDGSGKS.

Belongs to the thymidylate kinase family.

It carries out the reaction dTMP + ATP = dTDP + ADP. Functionally, phosphorylation of dTMP to form dTDP in both de novo and salvage pathways of dTTP synthesis. The polypeptide is Thymidylate kinase (Thermosipho africanus (strain TCF52B)).